A 505-amino-acid chain; its full sequence is Lysine--tRNA ligase (505 aa).

Residues Glu415 and Glu422 each coordinate Mg(2+).

Belongs to the class-II aminoacyl-tRNA synthetase family. Homodimer. Requires Mg(2+) as cofactor.

The protein localises to the cytoplasm. The enzyme catalyses tRNA(Lys) + L-lysine + ATP = L-lysyl-tRNA(Lys) + AMP + diphosphate. This is Lysine--tRNA ligase from Xanthomonas campestris pv. campestris (strain 8004).